A 247-amino-acid chain; its full sequence is DNA polymerase sliding clamp (247 aa).

This sequence belongs to the PCNA family. In terms of assembly, homotrimer. The subunits circularize to form a toroid; DNA passes through its center. Replication factor C (RFC) is required to load the toroid on the DNA.

Functionally, sliding clamp subunit that acts as a moving platform for DNA processing. Responsible for tethering the catalytic subunit of DNA polymerase and other proteins to DNA during high-speed replication. This Methanospirillum hungatei JF-1 (strain ATCC 27890 / DSM 864 / NBRC 100397 / JF-1) protein is DNA polymerase sliding clamp.